Here is a 240-residue protein sequence, read N- to C-terminus: Ribonuclease PH (240 aa).

Phosphate is bound by residues Arg87 and 125–127 (GTR).

Belongs to the RNase PH family. Homohexameric ring arranged as a trimer of dimers.

The catalysed reaction is tRNA(n+1) + phosphate = tRNA(n) + a ribonucleoside 5'-diphosphate. Phosphorolytic 3'-5' exoribonuclease that plays an important role in tRNA 3'-end maturation. Removes nucleotide residues following the 3'-CCA terminus of tRNAs; can also add nucleotides to the ends of RNA molecules by using nucleoside diphosphates as substrates, but this may not be physiologically important. Probably plays a role in initiation of 16S rRNA degradation (leading to ribosome degradation) during starvation. The polypeptide is Ribonuclease PH (Ruminiclostridium cellulolyticum (strain ATCC 35319 / DSM 5812 / JCM 6584 / H10) (Clostridium cellulolyticum)).